Consider the following 265-residue polypeptide: Mlc titration factor A (265 aa).

4 residues coordinate Zn(2+): His111, His148, His152, and Glu211.

It belongs to the MtfA family. As to quaternary structure, interacts with Mlc. Requires Zn(2+) as cofactor.

The protein localises to the cytoplasm. In terms of biological role, involved in the modulation of the activity of the glucose-phosphotransferase system (glucose-PTS). Interacts with the transcriptional repressor Mlc, preventing its interaction with DNA and leading to the modulation of expression of genes regulated by Mlc, including ptsG, which encodes the PTS system glucose-specific EIICB component. Functionally, shows zinc-dependent metallopeptidase activity. The protein is Mlc titration factor A of Escherichia coli (strain 55989 / EAEC).